Here is a 398-residue protein sequence, read N- to C-terminus: uncharacterized protein (398 aa).

A helical transmembrane segment spans residues 88–108 (IGFTIGFAIFFILLFLLSNMV).

The protein to B.megaterium SpoIV.

Its subcellular location is the cell membrane. This is an uncharacterized protein from Bacillus subtilis (strain 168).